A 207-amino-acid chain; its full sequence is Dephospho-CoA kinase (207 aa).

The DPCK domain occupies 10–207 (TLGLTGGIGS…FYLTLRGGQS (198 aa)). 18-23 (GSGKSA) is a binding site for ATP.

The protein belongs to the CoaE family.

The protein resides in the cytoplasm. The enzyme catalyses 3'-dephospho-CoA + ATP = ADP + CoA + H(+). It functions in the pathway cofactor biosynthesis; coenzyme A biosynthesis; CoA from (R)-pantothenate: step 5/5. Functionally, catalyzes the phosphorylation of the 3'-hydroxyl group of dephosphocoenzyme A to form coenzyme A. The chain is Dephospho-CoA kinase from Pseudomonas fluorescens (strain ATCC BAA-477 / NRRL B-23932 / Pf-5).